The following is a 129-amino-acid chain: MLISKRIVMSITNEQILDAVADMSVMQVVELIEAMEEKFGVTAAAAVVAGGAAAEAAEEQTEFDVILTAVGAQKVQVIKAVRGATGLGLKEAKAVVDSAPASVKEGVDKAEAEALKAQLEEVGASVEIK.

The protein belongs to the bacterial ribosomal protein bL12 family. As to quaternary structure, homodimer. Part of the ribosomal stalk of the 50S ribosomal subunit. Forms a multimeric L10(L12)X complex, where L10 forms an elongated spine to which 2 to 4 L12 dimers bind in a sequential fashion. Binds GTP-bound translation factors.

Functionally, forms part of the ribosomal stalk which helps the ribosome interact with GTP-bound translation factors. Is thus essential for accurate translation. This Photobacterium profundum (strain SS9) protein is Large ribosomal subunit protein bL12.